Reading from the N-terminus, the 103-residue chain is Large ribosomal subunit protein uL24 (103 aa).

The protein belongs to the universal ribosomal protein uL24 family. Part of the 50S ribosomal subunit.

In terms of biological role, one of two assembly initiator proteins, it binds directly to the 5'-end of the 23S rRNA, where it nucleates assembly of the 50S subunit. Its function is as follows. One of the proteins that surrounds the polypeptide exit tunnel on the outside of the subunit. This is Large ribosomal subunit protein uL24 from Haemophilus ducreyi (strain 35000HP / ATCC 700724).